The sequence spans 254 residues: UPF0246 protein FTF1693c (254 aa).

The protein belongs to the UPF0246 family.

This chain is UPF0246 protein FTF1693c, found in Francisella tularensis subsp. tularensis (strain FSC 198).